Reading from the N-terminus, the 281-residue chain is Pantothenate synthetase (281 aa).

Position 30 to 37 (30 to 37 (MGNLHQGH)) interacts with ATP. Catalysis depends on His37, which acts as the Proton donor. (R)-pantoate is bound at residue Gln61. Residue Gln61 participates in beta-alanine binding. Position 149–152 (149–152 (GNKD)) interacts with ATP. (R)-pantoate is bound at residue Gln155. Residues Ile178 and 186–189 (MSSR) contribute to the ATP site.

Belongs to the pantothenate synthetase family. As to quaternary structure, homodimer.

Its subcellular location is the cytoplasm. It carries out the reaction (R)-pantoate + beta-alanine + ATP = (R)-pantothenate + AMP + diphosphate + H(+). Its pathway is cofactor biosynthesis; (R)-pantothenate biosynthesis; (R)-pantothenate from (R)-pantoate and beta-alanine: step 1/1. Catalyzes the condensation of pantoate with beta-alanine in an ATP-dependent reaction via a pantoyl-adenylate intermediate. The protein is Pantothenate synthetase of Shewanella baltica (strain OS195).